A 353-amino-acid chain; its full sequence is Methylthioribose-1-phosphate isomerase (353 aa).

Residues 51-53, arginine 94, and glutamine 199 contribute to the substrate site; that span reads RGA. Residue aspartate 240 is the Proton donor of the active site. Substrate is bound at residue 250–251; sequence NK.

This sequence belongs to the EIF-2B alpha/beta/delta subunits family. MtnA subfamily. Homodimer.

It catalyses the reaction 5-(methylsulfanyl)-alpha-D-ribose 1-phosphate = 5-(methylsulfanyl)-D-ribulose 1-phosphate. It functions in the pathway amino-acid biosynthesis; L-methionine biosynthesis via salvage pathway; L-methionine from S-methyl-5-thio-alpha-D-ribose 1-phosphate: step 1/6. In terms of biological role, catalyzes the interconversion of methylthioribose-1-phosphate (MTR-1-P) into methylthioribulose-1-phosphate (MTRu-1-P). The protein is Methylthioribose-1-phosphate isomerase of Bacillus cereus (strain ATCC 14579 / DSM 31 / CCUG 7414 / JCM 2152 / NBRC 15305 / NCIMB 9373 / NCTC 2599 / NRRL B-3711).